Here is a 189-residue protein sequence, read N- to C-terminus: Adenylate kinase (189 aa).

ATP is bound at residue 11 to 16 (GSGKGT). The NMP stretch occupies residues 31–60 (STGDVLRAEIKNGTELGKTAKGYIDQGQLI). AMP contacts are provided by residues Thr32, Arg37, 58-60 (QLI), 86-89 (GFPR), and Gln93. Residues 127 to 137 (KRGKESGRADD) form an LID region. Arg128 provides a ligand contact to ATP. Residues Arg134 and Arg145 each contribute to the AMP site. Gly173 contributes to the ATP binding site.

Belongs to the adenylate kinase family. Monomer.

The protein resides in the cytoplasm. The enzyme catalyses AMP + ATP = 2 ADP. The protein operates within purine metabolism; AMP biosynthesis via salvage pathway; AMP from ADP: step 1/1. In terms of biological role, catalyzes the reversible transfer of the terminal phosphate group between ATP and AMP. Plays an important role in cellular energy homeostasis and in adenine nucleotide metabolism. In Bacteroides fragilis (strain ATCC 25285 / DSM 2151 / CCUG 4856 / JCM 11019 / LMG 10263 / NCTC 9343 / Onslow / VPI 2553 / EN-2), this protein is Adenylate kinase.